We begin with the raw amino-acid sequence, 147 residues long: MSAFSMAPLFRQSIGFDRFNDLFESALRNEAGSTYPPYNIEKHGDERYRIVIAAAGFQESDLDVQVERGVLSVSGGKRENRSEGVTYLHQGIAQRAFKLSFRLVDHIEVKGAELRNGLLSIELVRIVPERPAPSAFRSAAAGRPLES.

The sHSP domain occupies 29-141; that stretch reads NEAGSTYPPY…APSAFRSAAA (113 aa).

The protein belongs to the small heat shock protein (HSP20) family.

This chain is 16 kDa heat shock protein B (ibpB), found in Azotobacter vinelandii.